Reading from the N-terminus, the 208-residue chain is Ribosomal RNA large subunit methyltransferase E (208 aa).

S-adenosyl-L-methionine-binding residues include G61, W63, D81, D97, and D122. K162 serves as the catalytic Proton acceptor.

This sequence belongs to the class I-like SAM-binding methyltransferase superfamily. RNA methyltransferase RlmE family.

It localises to the cytoplasm. It catalyses the reaction uridine(2552) in 23S rRNA + S-adenosyl-L-methionine = 2'-O-methyluridine(2552) in 23S rRNA + S-adenosyl-L-homocysteine + H(+). In terms of biological role, specifically methylates the uridine in position 2552 of 23S rRNA at the 2'-O position of the ribose in the fully assembled 50S ribosomal subunit. This is Ribosomal RNA large subunit methyltransferase E from Pseudomonas entomophila (strain L48).